A 371-amino-acid chain; its full sequence is Putative glutamate--cysteine ligase 2 (371 aa).

Belongs to the glutamate--cysteine ligase type 2 family. YbdK subfamily.

It carries out the reaction L-cysteine + L-glutamate + ATP = gamma-L-glutamyl-L-cysteine + ADP + phosphate + H(+). Its function is as follows. ATP-dependent carboxylate-amine ligase which exhibits weak glutamate--cysteine ligase activity. The chain is Putative glutamate--cysteine ligase 2 from Cupriavidus necator (strain ATCC 17699 / DSM 428 / KCTC 22496 / NCIMB 10442 / H16 / Stanier 337) (Ralstonia eutropha).